We begin with the raw amino-acid sequence, 180 residues long: Outer membrane protein YfaZ (180 aa).

The signal sequence occupies residues M1–A21.

The protein resides in the cell outer membrane. The chain is Outer membrane protein YfaZ (yfaZ) from Escherichia coli (strain K12).